Reading from the N-terminus, the 1216-residue chain is Regulator of telomere elongation helicase 1 (1216 aa).

Positions 7 to 295 constitute a Helicase ATP-binding domain; the sequence is KGVTVDFPFQ…TKVAQQAELH (289 aa). 42–49 is a binding site for ATP; it reads SPTGTGKT. C144, C162, C171, and C206 together coordinate [4Fe-4S] cluster. A Nuclear localization signal motif is present at residues 150 to 166; the sequence is KKQESNHMQVHLCRRKV. Positions 249 to 252 match the DEAH box motif; sequence DEAH. A Nuclear localization signal motif is present at residues 874-880; that stretch reads QRGRRRK. Disordered regions lie at residues 978–1018 and 1140–1172; these read GCSS…ATRQ and GPGT…RKTQ. A PIP-box motif is present at residues 1172–1179; that stretch reads QSKISSFL.

Belongs to the helicase family. RAD3/XPD subfamily. In terms of assembly, interacts with TERF1. Interacts (via PIP-box) with PCNA; the interaction is direct and essential for suppressing telomere fragility. Interacts with MMS19; the interaction mediates the association of RTEL1 with the cytosolic iron-sulfur protein assembly (CIA) complex. In terms of tissue distribution, highly expressed in adult testis, liver and ovary.

The protein localises to the nucleus. The catalysed reaction is ATP + H2O = ADP + phosphate + H(+). A probable ATP-dependent DNA helicase implicated in telomere-length regulation, DNA repair and the maintenance of genomic stability. Acts as an anti-recombinase to counteract toxic recombination and limit crossover during meiosis. Regulates meiotic recombination and crossover homeostasis by physically dissociating strand invasion events and thereby promotes noncrossover repair by meiotic synthesis dependent strand annealing (SDSA) as well as disassembly of D loop recombination intermediates. Also disassembles T loops and prevents telomere fragility by counteracting telomeric G4-DNA structures, which together ensure the dynamics and stability of the telomere. This is Regulator of telomere elongation helicase 1 from Bos taurus (Bovine).